A 623-amino-acid polypeptide reads, in one-letter code: Flap endonuclease 1 (623 aa).

The tract at residues 1–106 (MGIKGLTKFI…SELEKRGEKR (106 aa)) is N-domain. Position 34 (aspartate 34) interacts with Mg(2+). Residues arginine 47 and arginine 72 each coordinate DNA. Residues aspartate 88, glutamate 160, glutamate 162, aspartate 181, and aspartate 183 each coordinate Mg(2+). Residues 124 to 267 (EIKKQSGRTV…KTAYNLIKEY (144 aa)) form an I-domain region. Glutamate 160 provides a ligand contact to DNA. Residues glycine 245 and aspartate 247 each contribute to the DNA site. Aspartate 247 provides a ligand contact to Mg(2+). An interaction with PCNA region spans residues 350–358 (TQRRLDNFF). The tract at residues 368 to 517 (LVIEESQSQS…LSSNSTLHSC (150 aa)) is disordered. 2 stretches are compositionally biased toward basic and acidic residues: residues 410-424 (TKVE…KDEE) and 466-482 (QKSD…KTEQ). A compositionally biased stretch (polar residues) spans 502 to 517 (AGSNTHLSSNSTLHSC).

It belongs to the XPG/RAD2 endonuclease family. FEN1 subfamily. Interacts with PCNA. Three molecules of FEN1 bind to one PCNA trimer with each molecule binding to one PCNA monomer. PCNA stimulates the nuclease activity without altering cleavage specificity. Mg(2+) serves as cofactor. Phosphorylated. Phosphorylation upon DNA damage induces relocalization to the nuclear plasma.

Its subcellular location is the nucleus. The protein localises to the nucleolus. The protein resides in the nucleoplasm. It is found in the mitochondrion. In terms of biological role, structure-specific nuclease with 5'-flap endonuclease and 5'-3' exonuclease activities involved in DNA replication and repair. During DNA replication, cleaves the 5'-overhanging flap structure that is generated by displacement synthesis when DNA polymerase encounters the 5'-end of a downstream Okazaki fragment. It enters the flap from the 5'-end and then tracks to cleave the flap base, leaving a nick for ligation. Also involved in the long patch base excision repair (LP-BER) pathway, by cleaving within the apurinic/apyrimidinic (AP) site-terminated flap. Acts as a genome stabilization factor that prevents flaps from equilibrating into structures that lead to duplications and deletions. Also possesses 5'-3' exonuclease activity on nicked or gapped double-stranded DNA, and exhibits RNase H activity. Also involved in replication and repair of rDNA and in repairing mitochondrial DNA. This Plasmodium vivax (strain Salvador I) protein is Flap endonuclease 1.